The following is a 194-amino-acid chain: Phosphoheptose isomerase (194 aa).

Residues 37-194 form the SIS domain; the sequence is ISNSFKQGGK…LIEFEMAKQA (158 aa). 52–54 contacts substrate; sequence NGG. The Zn(2+) site is built by histidine 61 and glutamate 65. Residues glutamate 65, 93 to 94, 119 to 121, serine 124, and glutamine 172 each bind substrate; these read ND and STS. Residues glutamine 172 and histidine 180 each coordinate Zn(2+).

Belongs to the SIS family. GmhA subfamily. In terms of assembly, homotetramer. Zn(2+) serves as cofactor.

The protein resides in the cytoplasm. The enzyme catalyses 2 D-sedoheptulose 7-phosphate = D-glycero-alpha-D-manno-heptose 7-phosphate + D-glycero-beta-D-manno-heptose 7-phosphate. Its pathway is carbohydrate biosynthesis; D-glycero-D-manno-heptose 7-phosphate biosynthesis; D-glycero-alpha-D-manno-heptose 7-phosphate and D-glycero-beta-D-manno-heptose 7-phosphate from sedoheptulose 7-phosphate: step 1/1. Functionally, catalyzes the isomerization of sedoheptulose 7-phosphate in D-glycero-D-manno-heptose 7-phosphate. The sequence is that of Phosphoheptose isomerase from Haemophilus influenzae (strain 86-028NP).